The following is a 200-amino-acid chain: uncharacterized protein (200 aa).

2 stretches are compositionally biased toward low complexity: residues 1–13 (MTSA…AAES) and 28–44 (PSPA…AGPR). Disordered regions lie at residues 1-116 (MTSA…GGPG) and 137-200 (LPRD…SSFF). A compositionally biased stretch (basic residues) spans 88–102 (RCGRPRRRDPRRRRT). Low complexity predominate over residues 189–200 (PSSSSGLLSSFF).

This is an uncharacterized protein from Homo sapiens (Human).